Here is a 240-residue protein sequence, read N- to C-terminus: Ribonuclease PH (240 aa).

Residues R87 and 125 to 127 (GTR) contribute to the phosphate site.

It belongs to the RNase PH family. In terms of assembly, homohexameric ring arranged as a trimer of dimers.

The enzyme catalyses tRNA(n+1) + phosphate = tRNA(n) + a ribonucleoside 5'-diphosphate. In terms of biological role, phosphorolytic 3'-5' exoribonuclease that plays an important role in tRNA 3'-end maturation. Removes nucleotide residues following the 3'-CCA terminus of tRNAs; can also add nucleotides to the ends of RNA molecules by using nucleoside diphosphates as substrates, but this may not be physiologically important. Probably plays a role in initiation of 16S rRNA degradation (leading to ribosome degradation) during starvation. This Ruminiclostridium cellulolyticum (strain ATCC 35319 / DSM 5812 / JCM 6584 / H10) (Clostridium cellulolyticum) protein is Ribonuclease PH.